The chain runs to 163 residues: Nucleotide-binding protein GWCH70_0711 (163 aa).

The protein belongs to the YajQ family.

In terms of biological role, nucleotide-binding protein. In Geobacillus sp. (strain WCH70), this protein is Nucleotide-binding protein GWCH70_0711.